A 262-amino-acid polypeptide reads, in one-letter code: Indole-3-glycerol phosphate synthase (262 aa).

It belongs to the TrpC family.

It catalyses the reaction 1-(2-carboxyphenylamino)-1-deoxy-D-ribulose 5-phosphate + H(+) = (1S,2R)-1-C-(indol-3-yl)glycerol 3-phosphate + CO2 + H2O. The protein operates within amino-acid biosynthesis; L-tryptophan biosynthesis; L-tryptophan from chorismate: step 4/5. In Leuconostoc mesenteroides subsp. mesenteroides (strain ATCC 8293 / DSM 20343 / BCRC 11652 / CCM 1803 / JCM 6124 / NCDO 523 / NBRC 100496 / NCIMB 8023 / NCTC 12954 / NRRL B-1118 / 37Y), this protein is Indole-3-glycerol phosphate synthase.